The primary structure comprises 106 residues: U1-lycotoxin-Ls1b (106 aa).

The N-terminal stretch at 1–19 (MKVLVVVALLVTLISYSSS) is a signal peptide. The propeptide occupies 20 to 40 (EGIDDPEADELLSLMANEQTR). Disulfide bonds link Cys43–Cys58, Cys50–Cys67, Cys57–Cys85, and Cys69–Cys83.

It belongs to the neurotoxin 19 (CSTX) family. 04 (U1-Lctx) subfamily. Expressed by the venom gland.

The protein localises to the secreted. The sequence is that of U1-lycotoxin-Ls1b from Lycosa singoriensis (Wolf spider).